We begin with the raw amino-acid sequence, 179 residues long: Large ribosomal subunit protein uL5 (179 aa).

Belongs to the universal ribosomal protein uL5 family. As to quaternary structure, part of the 50S ribosomal subunit; part of the 5S rRNA/L5/L18/L25 subcomplex. Contacts the 5S rRNA and the P site tRNA. Forms a bridge to the 30S subunit in the 70S ribosome.

This is one of the proteins that bind and probably mediate the attachment of the 5S RNA into the large ribosomal subunit, where it forms part of the central protuberance. In the 70S ribosome it contacts protein S13 of the 30S subunit (bridge B1b), connecting the 2 subunits; this bridge is implicated in subunit movement. Contacts the P site tRNA; the 5S rRNA and some of its associated proteins might help stabilize positioning of ribosome-bound tRNAs. This Ruthia magnifica subsp. Calyptogena magnifica protein is Large ribosomal subunit protein uL5.